The sequence spans 341 residues: MKKYKAGIINVTGYAGLELARILESHPSVELCSVTGRSLAGKKLSDVFPYLHRLDLPITENLEGQVDVAFLALPHKEGAALVPALLEKGMRVIDISADFRLKDPALYQAWYGFEHPCPGLLEEAVYGLPELKRKDIAGARLVANPGCYPTSAILGLVPAFKSDLIEPSAIIDAKSGLSGSGRTPTVKTIFCEADEDVCAYSIGTHRHQPEIAQELCRASGGVIPRVTFCPHLVPMSRGILSTAYARLKQPVTDEEVKEIYRQFYKDEPFVKVTAEPPHTRYTRGTNMCFIYPVVDALNEQLIVISCIDNLVKGAAGQAVQNMNIMLGLAETEGLEAMATLP.

The active site involves Cys-147.

It belongs to the NAGSA dehydrogenase family. Type 1 subfamily.

It is found in the cytoplasm. It catalyses the reaction N-acetyl-L-glutamate 5-semialdehyde + phosphate + NADP(+) = N-acetyl-L-glutamyl 5-phosphate + NADPH + H(+). The protein operates within amino-acid biosynthesis; L-arginine biosynthesis; N(2)-acetyl-L-ornithine from L-glutamate: step 3/4. Functionally, catalyzes the NADPH-dependent reduction of N-acetyl-5-glutamyl phosphate to yield N-acetyl-L-glutamate 5-semialdehyde. This Dehalococcoides mccartyi (strain ATCC BAA-2100 / JCM 16839 / KCTC 5957 / BAV1) protein is N-acetyl-gamma-glutamyl-phosphate reductase.